We begin with the raw amino-acid sequence, 251 residues long: Aquaporin (251 aa).

Residues 1–11 (MAGETLRKIQS) are Cytoplasmic-facing. The chain crosses the membrane as a helical span at residues 12–32 (LLGEMVASFIFGFAVYSAILG). At 33 to 42 (STIAQQPAAK) the chain is on the extracellular side. A helical membrane pass occupies residues 43-63 (VIIGLTVGFSAIGIIYSFSDV). Residues 64-86 (TIAHFNPAITLAAILTGKMGILC) are Cytoplasmic-facing. The NPA signature appears at 69 to 71 (NPA). The helical transmembrane segment at 87–107 (GLGYMLAQCVGFILAVCALLV) threads the bilayer. Over 108–133 (CSPVGYKETLNVIRPAPAPFGADNLN) the chain is Extracellular. A helical membrane pass occupies residues 134-154 (VFFTEFFLTAILVHIAFAVAV). The Cytoplasmic portion of the chain corresponds to 155 to 179 (NPYRPKVDTDGKFVDPDEKEPVDRR). The chain crosses the membrane as a helical span at residues 180-200 (ITAPLCIGLTLGFLAFMGLVT). Residues 201-224 (SGGAFNPGLTLAPVIMSNTWQHFW) are Extracellular-facing. Residues 206 to 208 (NPG) carry the NPG motif. Residues 225–245 (LYLGAQYLGGLVGGLLQVFVL) traverse the membrane as a helical segment. Residues 246-251 (YKLSSN) are Cytoplasmic-facing.

The protein belongs to the MIP/aquaporin (TC 1.A.8) family.

The protein localises to the cell membrane. In terms of biological role, water channel required to facilitate the transport of water across membranes. Involved in osmotolerance. The protein is Aquaporin (AQP) of Encephalitozoon hellem (Microsporidian parasite).